Reading from the N-terminus, the 736-residue chain is 1,4-alpha-glucan branching enzyme GlgB (736 aa).

Asp415 acts as the Nucleophile in catalysis. The Proton donor role is filled by Glu468.

It belongs to the glycosyl hydrolase 13 family. GlgB subfamily. As to quaternary structure, monomer.

The enzyme catalyses Transfers a segment of a (1-&gt;4)-alpha-D-glucan chain to a primary hydroxy group in a similar glucan chain.. The protein operates within glycan biosynthesis; glycogen biosynthesis. In terms of biological role, catalyzes the formation of the alpha-1,6-glucosidic linkages in glycogen by scission of a 1,4-alpha-linked oligosaccharide from growing alpha-1,4-glucan chains and the subsequent attachment of the oligosaccharide to the alpha-1,6 position. This is 1,4-alpha-glucan branching enzyme GlgB from Rhodopirellula baltica (strain DSM 10527 / NCIMB 13988 / SH1).